Consider the following 359-residue polypeptide: Stearoyl-CoA desaturase (359 aa).

Over 1–72 (MPAHLLQEEI…EGPKPKLEYV (72 aa)) the chain is Cytoplasmic. A helical transmembrane segment spans residues 73–93 (WRNIILMSLLHLGALYGITLI). Asparagine 75 is a substrate binding site. Residues 94–97 (PTCK) are Lumenal-facing. A helical membrane pass occupies residues 98–118 (IYTYIWVLFYYLMGALGITAG). At 119–217 (AHRLWSHRTY…EKLVMFQRRY (99 aa)) the chain is on the cytoplasmic side. Residues histidine 120 and histidine 125 each coordinate Fe cation. A Histidine box-1 motif is present at residues 120–125 (HRLWSH). Positions 148, 155, and 156 each coordinate substrate. The Fe cation site is built by histidine 157, histidine 160, and histidine 161. Positions 157–161 (HRAHH) match the Histidine box-2 motif. Residues arginine 188 and lysine 189 each contribute to the substrate site. A phosphoserine mark is found at serine 198 and serine 203. A helical membrane pass occupies residues 218–237 (YKPGVLLLCFILPTLVPWYL). The Lumenal segment spans residues 238–241 (WDET). A helical transmembrane segment spans residues 242 to 263 (FQNSLFFATLFRYALGLNVTWL). A substrate-binding site is contributed by tryptophan 262. Over 264–359 (VNSAAHMYGY…RTGEESYKSG (96 aa)) the chain is Cytoplasmic. Positions 269, 298, 301, and 302 each coordinate Fe cation. A Histidine box-3 motif is present at residues 298-302 (HNYHH).

This sequence belongs to the fatty acid desaturase type 1 family. The cofactor is Fe(2+).

The protein localises to the endoplasmic reticulum membrane. It catalyses the reaction octadecanoyl-CoA + 2 Fe(II)-[cytochrome b5] + O2 + 2 H(+) = (9Z)-octadecenoyl-CoA + 2 Fe(III)-[cytochrome b5] + 2 H2O. The catalysed reaction is hexadecanoyl-CoA + 2 Fe(II)-[cytochrome b5] + O2 + 2 H(+) = (9Z)-hexadecenoyl-CoA + 2 Fe(III)-[cytochrome b5] + 2 H2O. Stearoyl-CoA desaturase that utilizes O(2) and electrons from reduced cytochrome b5 to introduce the first double bond into saturated fatty acyl-CoA substrates. Catalyzes the insertion of a cis double bond at the delta-9 position into fatty acyl-CoA substrates including palmitoyl-CoA and stearoyl-CoA. Gives rise to a mixture of 16:1 and 18:1 unsaturated fatty acids. Plays an important role in lipid biosynthesis. Plays an important role in regulating the expression of genes that are involved in lipogenesis and in regulating mitochondrial fatty acid oxidation. Plays an important role in body energy homeostasis. Contributes to the biosynthesis of membrane phospholipids, cholesterol esters and triglycerides. This Bos taurus (Bovine) protein is Stearoyl-CoA desaturase (SCD).